The primary structure comprises 251 residues: Probable caffeoyl-CoA O-methyltransferase 3 (251 aa).

Residues T61, D83, 85 to 86 (GV), S91, D109, and A138 each bind S-adenosyl-L-methionine. An a divalent metal cation-binding site is contributed by D160. D162 is a binding site for S-adenosyl-L-methionine. A divalent metal cation contacts are provided by D186 and N187.

Belongs to the class I-like SAM-binding methyltransferase superfamily. Cation-dependent O-methyltransferase family. CCoAMT subfamily.

It catalyses the reaction (E)-caffeoyl-CoA + S-adenosyl-L-methionine = (E)-feruloyl-CoA + S-adenosyl-L-homocysteine + H(+). This chain is Probable caffeoyl-CoA O-methyltransferase 3 (omt1), found in Dictyostelium discoideum (Social amoeba).